The chain runs to 558 residues: Formate--tetrahydrofolate ligase (558 aa).

Residue 66-73 participates in ATP binding; sequence TPAGEGKT.

This sequence belongs to the formate--tetrahydrofolate ligase family.

The enzyme catalyses (6S)-5,6,7,8-tetrahydrofolate + formate + ATP = (6R)-10-formyltetrahydrofolate + ADP + phosphate. It functions in the pathway one-carbon metabolism; tetrahydrofolate interconversion. The polypeptide is Formate--tetrahydrofolate ligase (Neisseria gonorrhoeae (strain NCCP11945)).